The primary structure comprises 101 residues: Small ribosomal subunit protein uS14 (101 aa).

This sequence belongs to the universal ribosomal protein uS14 family. As to quaternary structure, part of the 30S ribosomal subunit. Contacts proteins S3 and S10.

Binds 16S rRNA, required for the assembly of 30S particles and may also be responsible for determining the conformation of the 16S rRNA at the A site. The sequence is that of Small ribosomal subunit protein uS14 from Hyphomonas neptunium (strain ATCC 15444).